The following is a 157-amino-acid chain: Small ribosomal subunit protein uS7 (157 aa).

This sequence belongs to the universal ribosomal protein uS7 family. Part of the 30S ribosomal subunit. Contacts proteins S9 and S11.

Functionally, one of the primary rRNA binding proteins, it binds directly to 16S rRNA where it nucleates assembly of the head domain of the 30S subunit. Is located at the subunit interface close to the decoding center, probably blocks exit of the E-site tRNA. The protein is Small ribosomal subunit protein uS7 of Chlamydia muridarum (strain MoPn / Nigg).